A 29-amino-acid chain; its full sequence is HSQGTFTNDYTKYQDSRRAQDFVQWLMSN.

It belongs to the glucagon family.

It localises to the secreted. In terms of biological role, glucagon plays a key role in glucose metabolism and homeostasis. Regulates blood glucose by increasing gluconeogenesis and decreasing glycolysis. The polypeptide is Glucagon (gcg) (Polypterus senegalus (Senegal bichir)).